A 226-amino-acid chain; its full sequence is MARTPNIALVDYGVGNLHSARKGLEAMGARVTLSGQPLTLSAADGVVLPGVGSFDTAITRLNDRGLGDAIIQLVRAGQPMLGICLGLQVLFDSSEEGRLPGLGLLPGRVRRFRSEPGLTIPHVGWNQLHFDNVDCPLWRDLAAGGWVYFVHSYYVDPARAEDRAASAVHGSQHFTAAVCRDNLMAVQFHPEKSADTGLRILKNFVERAASRSAAEVAARCATRPPA.

The Glutamine amidotransferase type-1 domain occupies 6–214 (NIALVDYGVG…VERAASRSAA (209 aa)). The active-site Nucleophile is Cys84. Active-site residues include His189 and Glu191.

As to quaternary structure, heterodimer of HisH and HisF.

The protein localises to the cytoplasm. It carries out the reaction 5-[(5-phospho-1-deoxy-D-ribulos-1-ylimino)methylamino]-1-(5-phospho-beta-D-ribosyl)imidazole-4-carboxamide + L-glutamine = D-erythro-1-(imidazol-4-yl)glycerol 3-phosphate + 5-amino-1-(5-phospho-beta-D-ribosyl)imidazole-4-carboxamide + L-glutamate + H(+). It catalyses the reaction L-glutamine + H2O = L-glutamate + NH4(+). Its pathway is amino-acid biosynthesis; L-histidine biosynthesis; L-histidine from 5-phospho-alpha-D-ribose 1-diphosphate: step 5/9. IGPS catalyzes the conversion of PRFAR and glutamine to IGP, AICAR and glutamate. The HisH subunit catalyzes the hydrolysis of glutamine to glutamate and ammonia as part of the synthesis of IGP and AICAR. The resulting ammonia molecule is channeled to the active site of HisF. The sequence is that of Imidazole glycerol phosphate synthase subunit HisH from Gloeobacter violaceus (strain ATCC 29082 / PCC 7421).